A 443-amino-acid chain; its full sequence is 3-phosphoshikimate 1-carboxyvinyltransferase (443 aa).

The 3-phosphoshikimate site is built by Lys-25, Ser-26, and Arg-30. Phosphoenolpyruvate is bound at residue Lys-25. Residues Gly-117 and Arg-145 each contribute to the phosphoenolpyruvate site. 3-phosphoshikimate is bound by residues Ser-188, Ser-189, Gln-190, Ser-217, Glu-331, and His-358. A phosphoenolpyruvate-binding site is contributed by Gln-190. Residue Glu-331 is the Proton acceptor of the active site. Residues Arg-362, Arg-404, and Lys-428 each contribute to the phosphoenolpyruvate site.

This sequence belongs to the EPSP synthase family. In terms of assembly, monomer.

The protein localises to the cytoplasm. The catalysed reaction is 3-phosphoshikimate + phosphoenolpyruvate = 5-O-(1-carboxyvinyl)-3-phosphoshikimate + phosphate. It functions in the pathway metabolic intermediate biosynthesis; chorismate biosynthesis; chorismate from D-erythrose 4-phosphate and phosphoenolpyruvate: step 6/7. Its function is as follows. Catalyzes the transfer of the enolpyruvyl moiety of phosphoenolpyruvate (PEP) to the 5-hydroxyl of shikimate-3-phosphate (S3P) to produce enolpyruvyl shikimate-3-phosphate and inorganic phosphate. The polypeptide is 3-phosphoshikimate 1-carboxyvinyltransferase (Tropheryma whipplei (strain TW08/27) (Whipple's bacillus)).